The sequence spans 773 residues: Leucine-rich repeat-containing protein let-4 (773 aa).

The N-terminal stretch at 1-20 (MRLLLCLLLFSTLLINSTNA) is a signal peptide. The Extracellular portion of the chain corresponds to 21 to 689 (CPGVITQACF…RLEKSFFTTT (669 aa)). LRR repeat units follow at residues 61-84 (VGLIQSLTMNQAELVELPPNFFSG), 85-107 (LFIRRLDLSQNKIKKIDDAAFAG), 109-132 (NPVLEEVVLNHNLIEKVPAAALAG), 133-157 (LPNLLRLDLSNNSIVEIQEQEIFPN), 159-181 (NKLYDINLGSNKIFSIHTSTFQN), 183-206 (KNSIQTINLGHNNMTAVPSSAIRG), 207-230 (LKQLQSLHLHKNRIEQLDALNFLN), 231-254 (LPVLNLLNLAGNQIHELNRQAFLN), 256-278 (PSLRYLYLSGNKITKLTAYQFQT), 279-302 (FEQLEMLDLTNNEIGAIPANSLSG), 303-326 (LKQLRQLYLAHNKISNISSNAFTN), 328-349 (SIVVLVLSSNELKTLTAGIISG), 350-373 (LPNLQQVSFRDNQIKTINRNAFYD), 375-397 (ASLVMLDLAKNQLTEIAPTTFLA), 399-421 (LNLLLVDLSENKLPKTPYSAFNS), and 486-516 (LVQIPKMQIHRNVHTTTGDQAPQIPSGAFQQ). Residues 690–710 (IIFICVGTAVIVLVVVIAGLC) traverse the membrane as a helical segment. The Cytoplasmic segment spans residues 711-773 (ISKHRQLQFE…PGSSYCNYYK (63 aa)).

In terms of tissue distribution, in L1 larvae, expressed in a subset of epithelial cells including epidermal, vulval and rectal cells and the excretory duct and pore. Absent from internal epithelia such as the gut and pharyngeal tubes. Transiently expressed in the excretory canal cell at the 1.5-fold embryonic stage but no longer visible in this cell at hatching.

The protein resides in the apical cell membrane. Required for apical extracellular matrix organization and epithelial junction maintenance. The sequence is that of Leucine-rich repeat-containing protein let-4 (let-4) from Caenorhabditis elegans.